We begin with the raw amino-acid sequence, 367 residues long: Alanine racemase (367 aa).

The Proton acceptor; specific for D-alanine role is filled by Lys40. Residue Lys40 is modified to N6-(pyridoxal phosphate)lysine. Residue Arg136 participates in substrate binding. Tyr263 functions as the Proton acceptor; specific for L-alanine in the catalytic mechanism. Met310 contacts substrate.

This sequence belongs to the alanine racemase family. The cofactor is pyridoxal 5'-phosphate.

It catalyses the reaction L-alanine = D-alanine. The protein operates within amino-acid biosynthesis; D-alanine biosynthesis; D-alanine from L-alanine: step 1/1. Functionally, catalyzes the interconversion of L-alanine and D-alanine. May also act on other amino acids. This chain is Alanine racemase (alr), found in Streptococcus thermophilus (strain CNRZ 1066).